Consider the following 229-residue polypeptide: uncharacterized protein (229 aa).

In terms of domain architecture, S4 RNA-binding spans 2–69 (QRLAKLISNA…KSRLWIYYKP (68 aa)). The active-site Nucleophile is Asp-102.

The protein belongs to the pseudouridine synthase RsuA family.

It carries out the reaction a uridine in RNA = a pseudouridine in RNA. This is an uncharacterized protein from Rickettsia bellii (strain RML369-C).